A 395-amino-acid polypeptide reads, in one-letter code: MRN complex-interacting protein (395 aa).

Basic and acidic residues predominate over residues 90–100 (DPKSEQEEAHV). Disordered regions lie at residues 90–155 (DPKS…GGNC) and 180–275 (KRSS…FGES). Polar residues predominate over residues 104–113 (SKYTDQTTEG). Positions 117 to 127 (EKDDEDEDENV) are enriched in acidic residues. Residues 142–145 (RKKM) carry the Nuclear localization signal (NLS) motif. Residues 183–195 (SSSWNKGSVSKYS) show a composition bias toward low complexity. Polar residues-rich tracts occupy residues 224 to 244 (ACSS…QIKS) and 260 to 270 (QSESPSVSSHQ).

Belongs to the MRNIP family.

It is found in the nucleus. Its subcellular location is the nucleoplasm. Plays a role in the cellular response to DNA damage and the maintenance of genome stability through its association with the MRN damage-sensing complex. Promotes chromatin loading and activity of the MRN complex to facilitate subsequent ATM-mediated DNA damage response signaling and DNA repair. In Danio rerio (Zebrafish), this protein is MRN complex-interacting protein.